Consider the following 510-residue polypeptide: 3,4-dihydroxyphenylacetaldehyde synthase (510 aa).

Asparagine 192 is an active-site residue. Lysine 303 bears the N6-(pyridoxal phosphate)lysine mark.

Belongs to the group II decarboxylase family. Pyridoxal 5'-phosphate is required as a cofactor.

The catalysed reaction is L-dopa + O2 + H2O + H(+) = 3,4-dihydroxyphenylacetaldehyde + H2O2 + NH4(+) + CO2. Catalyzes the decarboxylation-oxidative deamination of L-3,4-dihydroxyphenylalanine (L-DOPA) to 3,4-dihydroxylphenylacetaldehyde (DHPAA). Involved in cuticle development. Probably responsible for the protein cross-linking during the development of flexible cuticles. The sequence is that of 3,4-dihydroxyphenylacetaldehyde synthase (amd) from Drosophila melanogaster (Fruit fly).